A 410-amino-acid chain; its full sequence is S-adenosylmethionine synthase (410 aa).

An ATP-binding site is contributed by His-15. Asp-17 is a binding site for Mg(2+). Glu-43 provides a ligand contact to K(+). L-methionine is bound by residues Glu-56 and Gln-100. Residues 100–110 (QSPDIAKGVDT) form a flexible loop region. ATP contacts are provided by residues 171-173 (DGK), 248-249 (KF), Asp-257, 263-264 (RK), Ala-280, and Lys-284. Asp-257 lines the L-methionine pocket. Lys-288 contacts L-methionine.

Belongs to the AdoMet synthase family. As to quaternary structure, homotetramer; dimer of dimers. Mg(2+) serves as cofactor. Requires K(+) as cofactor.

The protein resides in the cytoplasm. It catalyses the reaction L-methionine + ATP + H2O = S-adenosyl-L-methionine + phosphate + diphosphate. It functions in the pathway amino-acid biosynthesis; S-adenosyl-L-methionine biosynthesis; S-adenosyl-L-methionine from L-methionine: step 1/1. In terms of biological role, catalyzes the formation of S-adenosylmethionine (AdoMet) from methionine and ATP. The overall synthetic reaction is composed of two sequential steps, AdoMet formation and the subsequent tripolyphosphate hydrolysis which occurs prior to release of AdoMet from the enzyme. The chain is S-adenosylmethionine synthase from Prochlorococcus marinus (strain MIT 9211).